The sequence spans 188 residues: Large ribosomal subunit protein eL18B (188 aa).

The interval 153–188 is disordered; that stretch reads GKAPGTPHSRTKPYVLSKGRKFERARGRRASRGYKN. Residues 178-188 are compositionally biased toward basic residues; the sequence is RGRRASRGYKN.

Belongs to the eukaryotic ribosomal protein eL18 family. In terms of assembly, component of the large ribosomal subunit.

It is found in the cytoplasm. The protein localises to the cytosol. Its subcellular location is the rough endoplasmic reticulum. Its function is as follows. Component of the large ribosomal subunit. The ribosome is a large ribonucleoprotein complex responsible for the synthesis of proteins in the cell. This chain is Large ribosomal subunit protein eL18B (rpl18-b), found in Xenopus laevis (African clawed frog).